Reading from the N-terminus, the 229-residue chain is 2,3-bisphosphoglycerate-dependent phosphoglycerate mutase (229 aa).

Substrate is bound by residues 7–14 (RHGQSEWN), 20–21 (TG), Arg-59, 86–89 (ERHY), Lys-97, 113–114 (RR), and 182–183 (GN). Residue His-8 is the Tele-phosphohistidine intermediate of the active site. Glu-86 serves as the catalytic Proton donor/acceptor.

The protein belongs to the phosphoglycerate mutase family. BPG-dependent PGAM subfamily.

The enzyme catalyses (2R)-2-phosphoglycerate = (2R)-3-phosphoglycerate. Its pathway is carbohydrate degradation; glycolysis; pyruvate from D-glyceraldehyde 3-phosphate: step 3/5. Its function is as follows. Catalyzes the interconversion of 2-phosphoglycerate and 3-phosphoglycerate. The chain is 2,3-bisphosphoglycerate-dependent phosphoglycerate mutase from Listeria monocytogenes serotype 4b (strain F2365).